The chain runs to 597 residues: Arginine--tRNA ligase (597 aa).

The 'HIGH' region signature appears at 124 to 134 (PNVAKPLHVGH).

This sequence belongs to the class-I aminoacyl-tRNA synthetase family. As to quaternary structure, monomer.

Its subcellular location is the cytoplasm. It catalyses the reaction tRNA(Arg) + L-arginine + ATP = L-arginyl-tRNA(Arg) + AMP + diphosphate. This chain is Arginine--tRNA ligase, found in Agathobacter rectalis (strain ATCC 33656 / DSM 3377 / JCM 17463 / KCTC 5835 / VPI 0990) (Eubacterium rectale).